A 219-amino-acid polypeptide reads, in one-letter code: Large ribosomal subunit protein bL25 (219 aa).

The interval 176-219 (VTVVPPTDEPSEEEVEAMEGESATEEPEVVDEDKEDDEEENKED) is disordered. The span at 184–219 (EPSEEEVEAMEGESATEEPEVVDEDKEDDEEENKED) shows a compositional bias: acidic residues.

Belongs to the bacterial ribosomal protein bL25 family. CTC subfamily. As to quaternary structure, part of the 50S ribosomal subunit; part of the 5S rRNA/L5/L18/L25 subcomplex. Contacts the 5S rRNA. Binds to the 5S rRNA independently of L5 and L18.

In terms of biological role, this is one of the proteins that binds to the 5S RNA in the ribosome where it forms part of the central protuberance. This Staphylococcus epidermidis (strain ATCC 12228 / FDA PCI 1200) protein is Large ribosomal subunit protein bL25.